We begin with the raw amino-acid sequence, 131 residues long: MDKLQKTLEEWKQMLDPEQYNVCRLKGTERPFSGKYDKVKTDGIYHCICCDEPLFDSTTKFDSGCGWPSFYAPLENSAVIEVRDMSHGMIRTEVVCAKCDAHLGHVFPDGPPPTGLRYCINSVCLDLVPRS.

Residues 8-130 (LEEWKQMLDP…NSVCLDLVPR (123 aa)) enclose the MsrB domain. Residues Cys-47, Cys-50, Cys-96, and Cys-99 each coordinate Zn(2+). Residue Cys-119 is the Nucleophile of the active site.

Belongs to the MsrB Met sulfoxide reductase family. Zn(2+) is required as a cofactor.

It catalyses the reaction L-methionyl-[protein] + [thioredoxin]-disulfide + H2O = L-methionyl-(R)-S-oxide-[protein] + [thioredoxin]-dithiol. This chain is Peptide methionine sulfoxide reductase MsrB, found in Pseudomonas syringae pv. syringae (strain B728a).